Here is a 376-residue protein sequence, read N- to C-terminus: N-acetyldiaminopimelate deacetylase (376 aa).

Residue aspartate 69 is part of the active site. Glutamate 128 (proton acceptor) is an active-site residue.

This sequence belongs to the peptidase M20A family. N-acetyldiaminopimelate deacetylase subfamily.

The enzyme catalyses N-acetyl-(2S,6S)-2,6-diaminopimelate + H2O = (2S,6S)-2,6-diaminopimelate + acetate. It functions in the pathway amino-acid biosynthesis; L-lysine biosynthesis via DAP pathway; LL-2,6-diaminopimelate from (S)-tetrahydrodipicolinate (acetylase route): step 3/3. Functionally, catalyzes the conversion of N-acetyl-diaminopimelate to diaminopimelate and acetate. The protein is N-acetyldiaminopimelate deacetylase of Streptococcus pneumoniae (strain P1031).